The primary structure comprises 191 residues: GDP-mannose pyrophosphatase (191 aa).

GDP-alpha-D-mannose contacts are provided by residues tyrosine 17, 38 to 40 (KRE), arginine 67, and 85 to 87 (AGL). Residues 43–180 (DRGNGATILL…EIRDGKTVLL (138 aa)) form the Nudix hydrolase domain. Mg(2+) contacts are provided by alanine 85, glutamate 100, and glutamate 104. Positions 86–106 (GLLDNDEPEACIRKEAIEETG) match the Nudix box motif. Residues glutamate 104, glutamate 127, 150 to 151 (DE), and lysine 176 contribute to the GDP-alpha-D-mannose site. Glutamate 151 is a Mg(2+) binding site.

The protein belongs to the Nudix hydrolase family. NudK subfamily. As to quaternary structure, homodimer. It depends on Mg(2+) as a cofactor.

The enzyme catalyses GDP-alpha-D-mannose + H2O = alpha-D-mannose 1-phosphate + GMP + 2 H(+). Nucleoside diphosphate sugar hydrolase that hydrolyzes GDP-mannose as its preferred substrate, yielding GMP and mannose-1-phosphate. The chain is GDP-mannose pyrophosphatase (nudK) from Citrobacter koseri (strain ATCC BAA-895 / CDC 4225-83 / SGSC4696).